Consider the following 247-residue polypeptide: MAALRLASFTLRPAAAAAASASSGATPAAPRSASFARAARGLPSLRLAPPRRRGDLVRPRAEAAADSYASALSEVAVENGTLEQTVSDLEKLQKIFADETVAEFFDNPTVPREEKTALIDEIAKSYELQPHVVNFINVVVDNFRATILPEIVVEFENIFNSLTGTEVATVTSVVQLESQDLAQIAQHVQKMTGAKNVRLKTQLDPELIAGFTVQYGRDGSSLIDMSVRKQIEEITSEFELPDVPLEV.

A chloroplast-targeting transit peptide spans Met1–Arg60.

Belongs to the ATPase delta chain family. As to quaternary structure, F-type ATPases have 2 components, CF(1) - the catalytic core - and CF(0) - the membrane proton channel. CF(1) has five subunits: alpha(3), beta(3), gamma(1), delta(1), epsilon(1). CF(0) has three main subunits: a, b and c.

Its subcellular location is the plastid. It localises to the chloroplast thylakoid membrane. In terms of biological role, this protein seems to be part of the stalk that links CF(0) to CF(1). It either transmits conformational changes from CF(0) into CF(1) or is implicated in proton conduction. The sequence is that of ATP synthase delta chain, chloroplastic (ATPD) from Sorghum bicolor (Sorghum).